The primary structure comprises 277 residues: Phosphatidylglycerol--prolipoprotein diacylglyceryl transferase (277 aa).

The next 7 membrane-spanning stretches (helical) occupy residues 21-41 (LAVR…LWLA), 60-80 (LLFA…VLFY), 95-115 (VWTG…AMLW), 124-144 (FFTI…AGRL), 176-196 (SQLY…NWFI), 203-223 (GTVS…VEYV), and 239-259 (MGQI…LWAF). An a 1,2-diacyl-sn-glycero-3-phospho-(1'-sn-glycerol)-binding site is contributed by Arg-143.

Belongs to the Lgt family.

It is found in the cell inner membrane. It carries out the reaction L-cysteinyl-[prolipoprotein] + a 1,2-diacyl-sn-glycero-3-phospho-(1'-sn-glycerol) = an S-1,2-diacyl-sn-glyceryl-L-cysteinyl-[prolipoprotein] + sn-glycerol 1-phosphate + H(+). Its pathway is protein modification; lipoprotein biosynthesis (diacylglyceryl transfer). Functionally, catalyzes the transfer of the diacylglyceryl group from phosphatidylglycerol to the sulfhydryl group of the N-terminal cysteine of a prolipoprotein, the first step in the formation of mature lipoproteins. This is Phosphatidylglycerol--prolipoprotein diacylglyceryl transferase from Aliivibrio fischeri (strain ATCC 700601 / ES114) (Vibrio fischeri).